A 248-amino-acid polypeptide reads, in one-letter code: Segregation and condensation protein A (248 aa).

Belongs to the ScpA family. As to quaternary structure, component of a cohesin-like complex composed of ScpA, ScpB and the Smc homodimer, in which ScpA and ScpB bind to the head domain of Smc. The presence of the three proteins is required for the association of the complex with DNA.

It is found in the cytoplasm. In terms of biological role, participates in chromosomal partition during cell division. May act via the formation of a condensin-like complex containing Smc and ScpB that pull DNA away from mid-cell into both cell halves. The chain is Segregation and condensation protein A from Bacillus cytotoxicus (strain DSM 22905 / CIP 110041 / 391-98 / NVH 391-98).